The chain runs to 684 residues: Putative glucan endo-1,3-beta-glucosidase btgC (684 aa).

A compositionally biased stretch (polar residues) spans 1–10 (MAGVNRSFSY). Disordered stretches follow at residues 1-38 (MAGV…LYST), 124-143 (AERD…APPD), and 157-182 (DSYS…TTPS). Residues 1–302 (MAGVNRSFSY…HIIGGGSRKR (302 aa)) lie on the Cytoplasmic side of the membrane. Residues 12–32 (RGDDALLRDDEREISPLRSAE) show a composition bias toward basic and acidic residues. The chain crosses the membrane as a helical; Signal-anchor for type II membrane protein span at residues 303 to 323 (GWIVGLILAAVIVAAIVGGAV). The Extracellular portion of the chain corresponds to 324-684 (GGILGHQEHD…IPDCGGKTIT (361 aa)). A disordered region spans residues 330-358 (QEHDGDTSSSSSSSSSSGTGSGGSDKGDG). Over residues 336 to 347 (TSSSSSSSSSSG) the composition is skewed to low complexity. N-linked (GlcNAc...) asparagine glycans are attached at residues asparagine 404, asparagine 427, asparagine 455, and asparagine 474. Glutamate 487 acts as the Proton donor in catalysis. Catalysis depends on glutamate 586, which acts as the Nucleophile. Asparagine 631 carries N-linked (GlcNAc...) asparagine glycosylation.

The protein belongs to the glycosyl hydrolase 17 family.

It is found in the cell membrane. The enzyme catalyses Hydrolysis of (1-&gt;3)-beta-D-glucosidic linkages in (1-&gt;3)-beta-D-glucans.. Functionally, glucanases play a role in cell expansion during growth, in cell-cell fusion during mating, and in spore release during sporulation. This enzyme may be involved in beta-glucan degradation. Active on laminarin and lichenan. This is Putative glucan endo-1,3-beta-glucosidase btgC (btgC) from Aspergillus niger (strain ATCC MYA-4892 / CBS 513.88 / FGSC A1513).